The primary structure comprises 488 residues: Ribulose bisphosphate carboxylase large chain (488 aa).

The substrate site is built by asparagine 127 and threonine 177. Catalysis depends on lysine 179, which acts as the Proton acceptor. Lysine 181 serves as a coordination point for substrate. The Mg(2+) site is built by lysine 205, aspartate 207, and glutamate 208. Lysine 205 is modified (N6-carboxylysine). Histidine 297 functions as the Proton acceptor in the catalytic mechanism. Substrate contacts are provided by arginine 298, histidine 330, and serine 382.

Belongs to the RuBisCO large chain family. Type I subfamily. As to quaternary structure, heterohexadecamer of 8 large chains and 8 small chains. The cofactor is Mg(2+).

Its subcellular location is the plastid. It localises to the chloroplast. The catalysed reaction is 2 (2R)-3-phosphoglycerate + 2 H(+) = D-ribulose 1,5-bisphosphate + CO2 + H2O. The enzyme catalyses D-ribulose 1,5-bisphosphate + O2 = 2-phosphoglycolate + (2R)-3-phosphoglycerate + 2 H(+). Functionally, ruBisCO catalyzes two reactions: the carboxylation of D-ribulose 1,5-bisphosphate, the primary event in carbon dioxide fixation, as well as the oxidative fragmentation of the pentose substrate in the photorespiration process. Both reactions occur simultaneously and in competition at the same active site. The sequence is that of Ribulose bisphosphate carboxylase large chain from Emiliania huxleyi (Coccolithophore).